The following is a 134-amino-acid chain: Large ribosomal subunit protein bL17 (134 aa).

Belongs to the bacterial ribosomal protein bL17 family. Part of the 50S ribosomal subunit. Contacts protein L32.

This Aromatoleum aromaticum (strain DSM 19018 / LMG 30748 / EbN1) (Azoarcus sp. (strain EbN1)) protein is Large ribosomal subunit protein bL17.